The following is a 311-amino-acid chain: Ribosomal RNA small subunit methyltransferase H (311 aa).

Residues 34–36 (GGH), Asp54, Phe78, Asp100, and Gln107 contribute to the S-adenosyl-L-methionine site.

It belongs to the methyltransferase superfamily. RsmH family.

Its subcellular location is the cytoplasm. The enzyme catalyses cytidine(1402) in 16S rRNA + S-adenosyl-L-methionine = N(4)-methylcytidine(1402) in 16S rRNA + S-adenosyl-L-homocysteine + H(+). In terms of biological role, specifically methylates the N4 position of cytidine in position 1402 (C1402) of 16S rRNA. In Hamiltonella defensa subsp. Acyrthosiphon pisum (strain 5AT), this protein is Ribosomal RNA small subunit methyltransferase H.